Here is an 83-residue protein sequence, read N- to C-terminus: Protein L83L (83 aa).

Residues 1 to 10 are compositionally biased toward polar residues; that stretch reads MDTSLKNNDG. Residues 1–25 form a disordered region; it reads MDTSLKNNDGASEADNKNYQDYKDE. The span at 14–25 shows a compositional bias: basic and acidic residues; the sequence is ADNKNYQDYKDE.

The protein belongs to the asfivirus L83L family. Interacts with host IL1B.

The protein resides in the host cytoplasm. In terms of biological role, may subvert the host innate immune response by interacting with host IL1B and interfering with its function. The polypeptide is Protein L83L (Ornithodoros (relapsing fever ticks)).